The primary structure comprises 500 residues: Cryptochrome DASH (500 aa).

Residues 4–138 (KTVLVWYRND…PVRSFWGTTL (135 aa)) form the Photolyase/cryptochrome alpha/beta domain.

It belongs to the DNA photolyase class-1 family. It depends on FAD as a cofactor. The cofactor is (6R)-5,10-methylene-5,6,7,8-tetrahydrofolate.

Functionally, may have a photoreceptor function. Binds DNA; probably functions as a transcriptional repressor. This Gloeobacter violaceus (strain ATCC 29082 / PCC 7421) protein is Cryptochrome DASH (cry).